The following is a 406-amino-acid chain: Transforming growth factor beta regulator 1 (406 aa).

2 disordered regions span residues 1-28 and 109-144; these read MSVL…PRKS and SSVG…ENSK. Position 2 is an N-acetylserine (serine 2). Threonine 13 is modified (phosphothreonine). The segment covering 134–144 has biased composition (basic and acidic residues); sequence EKKEKGKENSK. Positions 177 to 236 constitute an FYR N-terminal domain; the sequence is VFPIGLGGLTVYSLGEIITNRPGFHDENAIYPVGYCSTRVYASMKCPDQKCLYTCQIKDG. In terms of domain architecture, FYR C-terminal spans 237-316; the sequence is GVQPQFEIVP…QNCVNYQWVK (80 aa).

It belongs to the TBRG1 family. Interacts with CDKN2A and MDM2. Post-translationally, ubiquitinated; mediated by MDM2 and leading to its subsequent proteasomal degradation.

The protein resides in the nucleus. Acts as a growth inhibitor. Can activate p53/TP53, causes G1 arrest and collaborates with CDKN2A to restrict proliferation, but does not require either protein to inhibit DNA synthesis. Redistributes CDKN2A into the nucleoplasm. Involved in maintaining chromosomal stability. In Mus musculus (Mouse), this protein is Transforming growth factor beta regulator 1 (Tbrg1).